The following is a 125-amino-acid chain: MPTISQLVRKGRKTIASASDSPALKECPQKRGVCTVVKTTTPKKPNSALRKVARIRLTNGYEVTAYIPGVGHNLQEHSVVLIRGGRVKDLPGVRYHIVRGALDAAGVANRMQSRSKYGAKKPKQK.

The residue at position 89 (Asp-89) is a 3-methylthioaspartic acid.

It belongs to the universal ribosomal protein uS12 family. In terms of assembly, part of the 30S ribosomal subunit. Contacts proteins S8 and S17. May interact with IF1 in the 30S initiation complex.

Functionally, with S4 and S5 plays an important role in translational accuracy. Its function is as follows. Interacts with and stabilizes bases of the 16S rRNA that are involved in tRNA selection in the A site and with the mRNA backbone. Located at the interface of the 30S and 50S subunits, it traverses the body of the 30S subunit contacting proteins on the other side and probably holding the rRNA structure together. The combined cluster of proteins S8, S12 and S17 appears to hold together the shoulder and platform of the 30S subunit. The protein is Small ribosomal subunit protein uS12 of Clostridium botulinum (strain ATCC 19397 / Type A).